An 88-amino-acid chain; its full sequence is Putative regulatory protein Ava_1474 (88 aa).

The protein belongs to the RemA family.

The sequence is that of Putative regulatory protein Ava_1474 from Trichormus variabilis (strain ATCC 29413 / PCC 7937) (Anabaena variabilis).